The chain runs to 134 residues: Profilin-3 (134 aa).

The cysteines at positions 13 and 118 are disulfide-linked. The Involved in PIP2 interaction motif lies at 84–100 (AVIRGKKGSGGITIKKT). Thr-114 carries the post-translational modification Phosphothreonine.

This sequence belongs to the profilin family. As to quaternary structure, occurs in many kinds of cells as a complex with monomeric actin in a 1:1 ratio. In terms of processing, phosphorylated by MAP kinases.

It localises to the cytoplasm. It is found in the cytoskeleton. In terms of biological role, binds to actin and affects the structure of the cytoskeleton. At high concentrations, profilin prevents the polymerization of actin, whereas it enhances it at low concentrations. This chain is Profilin-3, found in Olea europaea (Common olive).